The following is a 326-amino-acid chain: Vitamin B12 import system permease protein BtuC (326 aa).

Helical transmembrane passes span 13–35 (IRWL…CAGE), 55–77 (IRLP…GAVM), 90–107 (LLGV…AVLL), 111–133 (QLPN…LILL), 146–168 (LLAG…YFST), 188–205 (WRQS…LWIC), 242–264 (MVGV…PHIL), 274–296 (VLLP…VARL), and 303–322 (LPIG…WLLL).

Belongs to the binding-protein-dependent transport system permease family. FecCD subfamily. The complex is composed of two ATP-binding proteins (BtuD), two transmembrane proteins (BtuC) and a solute-binding protein (BtuF).

The protein resides in the cell inner membrane. Part of the ABC transporter complex BtuCDF involved in vitamin B12 import. Involved in the translocation of the substrate across the membrane. The protein is Vitamin B12 import system permease protein BtuC of Shigella flexneri.